The following is a 304-amino-acid chain: Probable intron-encoded endonuclease 1 (304 aa).

The GIY-YIG domain maps to 84 to 175 (DKGGIYSFIN…RFNFDNLYNF (92 aa)).

To endonucleases of group I introns of fungi and phage.

The protein resides in the mitochondrion. Its function is as follows. Mitochondrial DNA endonuclease involved in intron homing. The sequence is that of Probable intron-encoded endonuclease 1 from Neurospora crassa (strain ATCC 24698 / 74-OR23-1A / CBS 708.71 / DSM 1257 / FGSC 987).